A 95-amino-acid polypeptide reads, in one-letter code: Small ribosomal subunit protein uS17 (95 aa).

This sequence belongs to the universal ribosomal protein uS17 family. As to quaternary structure, part of the 30S ribosomal subunit.

In terms of biological role, one of the primary rRNA binding proteins, it binds specifically to the 5'-end of 16S ribosomal RNA. This Mycoplasmopsis synoviae (strain 53) (Mycoplasma synoviae) protein is Small ribosomal subunit protein uS17.